The primary structure comprises 782 residues: Chaoptin (782 aa).

LRR repeat units lie at residues 16–37, 43–64, 67–88, 93–114, 117–138, 141–162, 165–186, 191–212, 224–245, 249–270, 273–294, 297–318, 321–342, 344–364, 370–391, 395–416, 419–442, 446–467, 468–488, 491–512, 514–535, and 539–560; these read SLLT…PSDA, RLEE…SFHF, SLKK…TFQG, DLTE…TFAD, QLEQ…AFMN, SLKR…TFQN, ELED…IFDQ, GMFH…PSVP, NIKV…FFRP, SLMQ…LFGN, HLQV…TFRN, KLQW…LFRF, NLRI…LFRE, GLER…TSLS, TLSE…GQLA, CLSW…TFKG, RLAS…SFQG, TLLH…STPN, LLSL…VAGN, SLRY…THSL, ELRH…SLLG, and QLEE…AFCK. Residues asparagine 196, asparagine 234, and asparagine 262 are each glycosylated (N-linked (GlcNAc...) asparagine). Asparagine 454 and asparagine 488 each carry an N-linked (GlcNAc...) asparagine glycan. The N-linked (GlcNAc...) asparagine glycan is linked to asparagine 530. Asparagine 618, asparagine 648, and asparagine 667 each carry an N-linked (GlcNAc...) asparagine glycan.

The protein belongs to the chaoptin family.

The protein localises to the cell membrane. Its function is as follows. Required for photoreceptor cell morphogenesis. Mediates homophilic cellular adhesion. In Tribolium castaneum (Red flour beetle), this protein is Chaoptin (CHP).